A 494-amino-acid chain; its full sequence is Glutamyl-tRNA(Gln) amidotransferase subunit A (494 aa).

Active-site charge relay system residues include lysine 81 and serine 156. The active-site Acyl-ester intermediate is serine 180.

It belongs to the amidase family. GatA subfamily. In terms of assembly, heterotrimer of A, B and C subunits.

The enzyme catalyses L-glutamyl-tRNA(Gln) + L-glutamine + ATP + H2O = L-glutaminyl-tRNA(Gln) + L-glutamate + ADP + phosphate + H(+). In terms of biological role, allows the formation of correctly charged Gln-tRNA(Gln) through the transamidation of misacylated Glu-tRNA(Gln) in organisms which lack glutaminyl-tRNA synthetase. The reaction takes place in the presence of glutamine and ATP through an activated gamma-phospho-Glu-tRNA(Gln). The polypeptide is Glutamyl-tRNA(Gln) amidotransferase subunit A (Mycolicibacterium gilvum (strain PYR-GCK) (Mycobacterium gilvum (strain PYR-GCK))).